The primary structure comprises 229 residues: Ribonuclease 3 (229 aa).

In terms of domain architecture, RNase III spans L5–G127. E40 provides a ligand contact to Mg(2+). D44 is an active-site residue. Mg(2+) is bound by residues D113 and E116. E116 is a catalytic residue. The 71-residue stretch at D154–V224 folds into the DRBM domain.

This sequence belongs to the ribonuclease III family. In terms of assembly, homodimer. It depends on Mg(2+) as a cofactor.

The protein resides in the cytoplasm. The enzyme catalyses Endonucleolytic cleavage to 5'-phosphomonoester.. In terms of biological role, digests double-stranded RNA. Involved in the processing of primary rRNA transcript to yield the immediate precursors to the large and small rRNAs (23S and 16S). Processes some mRNAs, and tRNAs when they are encoded in the rRNA operon. Processes pre-crRNA and tracrRNA of type II CRISPR loci if present in the organism. This chain is Ribonuclease 3, found in Pseudomonas syringae pv. tomato (strain ATCC BAA-871 / DC3000).